The chain runs to 572 residues: 3-ketosteroid oxygenase (572 aa).

Transmembrane regions (helical) follow at residues 52-72 and 84-104; these read AFAL…RNFL and YFMR…FIRI.

The protein belongs to the cytochrome P450 family. In terms of tissue distribution, expressed in the 2 embryonic head hypodermal cells XXXL/R.

Its subcellular location is the membrane. The catalysed reaction is 5alpha-cholest-7-en-3-one + 3 reduced [NADPH--hemoprotein reductase] + 3 O2 = (25S)-Delta7-dafachronate + 3 oxidized [NADPH--hemoprotein reductase] + 4 H2O + 4 H(+). The enzyme catalyses cholest-4-en-3-one + 3 reduced [NADPH--hemoprotein reductase] + 3 O2 = (25S)-3-oxocholest-4-en-26-oate + 3 oxidized [NADPH--hemoprotein reductase] + 4 H2O + 4 H(+). It participates in steroid hormone biosynthesis; dafachronic acid biosynthesis. Its function is as follows. Converts the 3-keto steroids 4-cholesten-3-one and lathosterone into the carboxylic metabolites 3-keto-4-cholestenate (Delta(4)-dafachronic acid, Delta(4)-DA) and 3-keto-7,(5a)-cholestenate (Delta(7)-dafachronic acid, Delta(7)-DA) respectively, by catalyzing successive oxidations at C-26. Dafachronic acids bind directly to the nuclear hormone receptor (NHR) DAF-12, suppressing dauer formation and inducing reproductive growth. In a non-cell autonomous manner, negatively regulates body wall muscle arm extensions to motor neurons probably by preventing daf-12 isoform b activation. May be involved in thermotolerance. The sequence is that of 3-ketosteroid oxygenase (daf-9) from Caenorhabditis elegans.